Reading from the N-terminus, the 1326-residue chain is Paired amphipathic helix protein Sin3-like 4 (1326 aa).

3 consecutive PAH domains span residues 8–78, 95–165, and 292–367; these read QKLT…LPKG, KPVE…LPDT, and IPSS…LAQC. 4 disordered regions span residues 272 to 299, 715 to 812, 844 to 864, and 927 to 1000; these read DDDSAEMSDQAREGDKFSGAIPSSSTYD, VPSR…RAET, SVAGLSNSNPKPALTSGTEEL, and SKSK…EGDM. Over residues 721-737 the composition is skewed to basic and acidic residues; it reads GAEDREDAVKSTNHDRE. Composition is skewed to polar residues over residues 744–757, 781–805, 844–861, and 942–961; these read SPQNGASIANSMRS, SSKTSDALLSCDNTQNDKMPKNLTT, SVAGLSNSNPKPALTSGT, and PRSSDGSGNTSHNGDVSGTD. The segment covering 967-981 has biased composition (basic and acidic residues); sequence DCYREDDIDHNKVES.

The protein localises to the nucleus. Acts as a transcriptional repressor. Plays roles in regulating gene expression and genome stability. In Arabidopsis thaliana (Mouse-ear cress), this protein is Paired amphipathic helix protein Sin3-like 4 (SNL4).